The sequence spans 298 residues: Plasmodesmata-located protein 7 (298 aa).

An N-terminal signal peptide occupies residues 1–30 (MPMAKLRNIIKTLSIFFFLIAATAPSLSSA). Residues 31 to 258 (TSATDTFVFG…YKTNYGGEKT (228 aa)) lie on the Extracellular side of the membrane. Gnk2-homologous domains lie at 35-139 (DTFV…NISF) and 140-240 (LGQE…TDGA). Cystine bridges form between cysteine 42–cysteine 117, cysteine 93–cysteine 102, cysteine 105–cysteine 130, cysteine 152–cysteine 218, cysteine 194–cysteine 203, and cysteine 206–cysteine 231. A helical transmembrane segment spans residues 259–279 (FAIIIGLLAAVVLLIIFLLFL). The necessary and sufficient for plasmodesmal targeting stretch occupies residues 259 to 279 (FAIIIGLLAAVVLLIIFLLFL). The Cytoplasmic segment spans residues 280 to 298 (RGVCSRGGDFSILHSFTLI).

It belongs to the cysteine-rich repeat secretory protein family. Plasmodesmata-located proteins (PDLD) subfamily. (Microbial infection) Interacts with Grapevine fanleaf virus (GFLV) 2B-MP. In terms of tissue distribution, highly expressed in lateral root and elongation zone.

The protein localises to the cell membrane. It localises to the cell junction. The protein resides in the plasmodesma. In terms of biological role, modulates cell-to-cell trafficking. The protein is Plasmodesmata-located protein 7 of Arabidopsis thaliana (Mouse-ear cress).